The following is an 88-amino-acid chain: Chaplin-F (88 aa).

The first 36 residues, 1–36 (MYNPKEHFSMSRIAKGLALTSVAAAAVAGTAGVAAA), serve as a signal peptide directing secretion. Positions 47–87 (SPGVLSGNVVQVPVHIPVNVCGNTIDVIGLLNPAFGNECEN) constitute a Chaplin domain. Residues cysteine 67 and cysteine 85 are joined by a disulfide bond.

Belongs to the chaplin family. Short chaplin subfamily. Homodimer; disulfide linked. About 20% of ChpF isolated from cell wall forms disulfide-bonded homodimers.

It localises to the cell surface. It is found in the secreted. Its subcellular location is the cell wall. The protein localises to the fimbrium. One of 8 partially redundant surface-active proteins required for efficient formation of aerial mycelium; the short chaplins assemble into a hydrophobic, amyloidal fibrillar surface layer that envelopes and protects aerial hyphae and spores, presumably anchored to the long chaplins. Chaplins have an overlapping function with the surface-active SapB peptide; chaplins are essential on minimal medium while on rich medium both chaplins and SapB are required for efficient aerial hyphae formation. Chaplins are also involved in cell attachment to a hydrophobic surface. Forms amyloid fibrils in vitro probably composed of stacked beta-sheets, at low extracellular concentrations individually restores the ability to form aerial hyphae to a chaplin-deficient strain. A small chaplin extract (ChpD, ChpE, ChpF, ChpG and ChpH) self-assembles into 2 different amyloids; small fibrils at the air-water interface form an amphipathic membrane that resembles spore-surface structures involved in aerial hyphae formation, and hydrophilic fibrils in solution that resemble the fibers that attach cells to a hydrophobic surface. At the air-water interface the hydrophilic surface is in contact with water (probably equivalent to the peptidoglycan layer), while the hydrophobic face is exposed to the air, making the surface of the aerial hyphae hydrophobic. A small chaplin extract applied to a chaplin-deficient strain restores aerial hyphae formation. The small chaplin extract forms an amyloid-like structure similar to that seen on the surface of cells without rodlets (rdlA-rdlB deletions), and is highly surface active, reducing surface tension from 72 to 26 mJ/m(2), which probably allows escape of hyphae from an aqueous environment into air. ChpF alone is less surface active at pH 3.0 than at pH 10.0, it reduces the surface tension of water from 72.8 mN/m to 50 mN/m at pH 3.0 or to 37 mN/m at pH 10.0. ChpF and ChpG are sufficient to restore the rodlet layer and hydrophobicity to a strain deleted for the other 6 chaplin genes. The polypeptide is Chaplin-F (Streptomyces coelicolor (strain ATCC BAA-471 / A3(2) / M145)).